Reading from the N-terminus, the 142-residue chain is Large ribosomal subunit protein uL13 (142 aa).

It belongs to the universal ribosomal protein uL13 family. As to quaternary structure, part of the 50S ribosomal subunit.

This protein is one of the early assembly proteins of the 50S ribosomal subunit, although it is not seen to bind rRNA by itself. It is important during the early stages of 50S assembly. The chain is Large ribosomal subunit protein uL13 from Alkalilimnicola ehrlichii (strain ATCC BAA-1101 / DSM 17681 / MLHE-1).